Reading from the N-terminus, the 147-residue chain is Hemoglobin subunit epsilon (147 aa).

The 145-residue stretch at H3 to H147 folds into the Globin domain. A phosphoserine mark is found at S14 and S51. Residues H64 and H93 each coordinate heme b.

Belongs to the globin family. Heterotetramer of two alpha chains and two epsilon chains in early embryonic hemoglobin Gower-2; two zeta chains and two epsilon chains in early embryonic hemoglobin Gower-1. As to expression, red blood cells.

Its function is as follows. The epsilon chain is a beta-type chain of early mammalian embryonic hemoglobin. In Propithecus verreauxi (White sifaka), this protein is Hemoglobin subunit epsilon (HBE1).